A 328-amino-acid chain; its full sequence is Small neutral protease regulatory protein (328 aa).

An HTH lysR-type domain is found at methionine 1 to threonine 60. Positions leucine 20–threonine 39 form a DNA-binding region, H-T-H motif.

Belongs to the LysR transcriptional regulatory family.

Its function is as follows. Transcriptional trans-activator of the gene (mprA) for the small neutral protease. In Streptomyces coelicolor (strain ATCC BAA-471 / A3(2) / M145), this protein is Small neutral protease regulatory protein (mprR).